A 376-amino-acid chain; its full sequence is Putative E3 ubiquitin-protein ligase XBAT34 (376 aa).

2 ANK repeats span residues 41–71 and 77–106; these read LGRT…NVNA and NGGT…NPLV. Residues 325-364 form an RING-type zinc finger; that stretch reads CVICVDAPSEAVCVPCGHVAGCISCLKEIENKKMGCPVCR.

It carries out the reaction S-ubiquitinyl-[E2 ubiquitin-conjugating enzyme]-L-cysteine + [acceptor protein]-L-lysine = [E2 ubiquitin-conjugating enzyme]-L-cysteine + N(6)-ubiquitinyl-[acceptor protein]-L-lysine.. The protein operates within protein modification; protein ubiquitination. Its function is as follows. No E3 ubiquitin-protein ligase activity observed when associated with the E2 enzyme UBC8 in vitro. The polypeptide is Putative E3 ubiquitin-protein ligase XBAT34 (XBAT34) (Arabidopsis thaliana (Mouse-ear cress)).